A 602-amino-acid chain; its full sequence is NADH-quinone oxidoreductase subunit C/D (602 aa).

The tract at residues 1–192 is NADH dehydrogenase I subunit C; it reads MVNNMTDLTA…DPFELTKAKQ (192 aa). The segment at 216–602 is NADH dehydrogenase I subunit D; that stretch reads DFMFLNLGPN…IDFVMSDVDR (387 aa).

This sequence in the N-terminal section; belongs to the complex I 30 kDa subunit family. It in the C-terminal section; belongs to the complex I 49 kDa subunit family. In terms of assembly, NDH-1 is composed of 13 different subunits. Subunits NuoB, CD, E, F, and G constitute the peripheral sector of the complex.

It localises to the cell inner membrane. It catalyses the reaction a quinone + NADH + 5 H(+)(in) = a quinol + NAD(+) + 4 H(+)(out). Functionally, NDH-1 shuttles electrons from NADH, via FMN and iron-sulfur (Fe-S) centers, to quinones in the respiratory chain. The immediate electron acceptor for the enzyme in this species is believed to be ubiquinone. Couples the redox reaction to proton translocation (for every two electrons transferred, four hydrogen ions are translocated across the cytoplasmic membrane), and thus conserves the redox energy in a proton gradient. The polypeptide is NADH-quinone oxidoreductase subunit C/D (Klebsiella pneumoniae (strain 342)).